The primary structure comprises 394 residues: RNA-binding motif protein, X-linked-like-2 (394 aa).

The RRM domain occupies 8 to 86 (GKLFIGGLNL…KAIKVAQATK (79 aa)). A compositionally biased stretch (basic and acidic residues) spans 67–78 (RDMNGKSLDGKA). The disordered stretch occupies residues 67-394 (RDMNGKSLDG…MERGGGRSRY (328 aa)). The segment covering 150 to 165 (RGPPPPPRRAGPPPKR) has biased composition (pro residues). Basic and acidic residues-rich tracts occupy residues 196–231 (PRREPPPPRRDPYLGPRDEGYSSRDGYSSRDYREPR) and 239–285 (EYTH…REPF). Residues 321 to 333 (YSGGRDSYSSSYG) show a composition bias toward low complexity. Basic and acidic residues-rich tracts occupy residues 334–350 (RSDRYSRGRDRVGRPDR) and 383–394 (GRMERGGGRSRY).

It localises to the nucleus. The protein is RNA-binding motif protein, X-linked-like-2 (RBMXL2) of Macaca fascicularis (Crab-eating macaque).